The sequence spans 661 residues: COBRA-like protein 7 (661 aa).

The N-terminal stretch at 1–26 is a signal peptide; that stretch reads MDSAPNFIPRLLLLSLLIVSIPLTSS. The segment at 26–45 is disordered; sequence SQSDANTTNPSPSPPSDSDL. N-linked (GlcNAc...) asparagine glycosylation is found at asparagine 31, asparagine 64, asparagine 122, asparagine 170, asparagine 314, asparagine 327, asparagine 356, asparagine 369, asparagine 398, asparagine 410, asparagine 430, asparagine 472, asparagine 551, and asparagine 561. Serine 637 carries the GPI-anchor amidated serine lipid modification. A propeptide spans 638 to 661 (removed in mature form); it reads SQHRKHISVFLLALPVLALLILRA.

This sequence belongs to the COBRA family. As to expression, expressed in roots, stems, leaves, flowers and siliques.

Its subcellular location is the cell membrane. The sequence is that of COBRA-like protein 7 (COBL7) from Arabidopsis thaliana (Mouse-ear cress).